A 231-amino-acid chain; its full sequence is Ribose-5-phosphate isomerase A (231 aa).

Substrate-binding positions include 23 to 26, 80 to 83, and 93 to 96; these read SGST, DGAD, and KGGG. The active-site Proton acceptor is the E102. K120 lines the substrate pocket.

It belongs to the ribose 5-phosphate isomerase family. Homodimer.

It catalyses the reaction aldehydo-D-ribose 5-phosphate = D-ribulose 5-phosphate. It functions in the pathway carbohydrate degradation; pentose phosphate pathway; D-ribose 5-phosphate from D-ribulose 5-phosphate (non-oxidative stage): step 1/1. Catalyzes the reversible conversion of ribose-5-phosphate to ribulose 5-phosphate. The chain is Ribose-5-phosphate isomerase A from Prochlorococcus marinus subsp. pastoris (strain CCMP1986 / NIES-2087 / MED4).